The chain runs to 195 residues: AEQLVIDYSEKSVIVQKEKLIAKNTDENLKLIFTDGVQQKEINQFISKSQAFVAGLMHDIGGVYPNHQRVEKAELFGIELLTEEREFPLIIHQKLSKYLAREHFKITDENILSAIECHTTLKENFTELDLIVFLADKISWDGGDNAPFKEGLLTALSVNLQSAALYYIDFIINDGLKVAHPWLLEAKKDLENQLS.

The 118-residue stretch at 24–141 (NTDENLKLIF…VFLADKISWD (118 aa)) folds into the HD domain.

This is an uncharacterized protein from Lactococcus lactis subsp. cremoris (Streptococcus cremoris).